Reading from the N-terminus, the 396-residue chain is Lipid-A-disaccharide synthase (396 aa).

Belongs to the LpxB family.

The catalysed reaction is a lipid X + a UDP-2-N,3-O-bis[(3R)-3-hydroxyacyl]-alpha-D-glucosamine = a lipid A disaccharide + UDP + H(+). It functions in the pathway bacterial outer membrane biogenesis; LPS lipid A biosynthesis. Its function is as follows. Condensation of UDP-2,3-diacylglucosamine and 2,3-diacylglucosamine-1-phosphate to form lipid A disaccharide, a precursor of lipid A, a phosphorylated glycolipid that anchors the lipopolysaccharide to the outer membrane of the cell. This is Lipid-A-disaccharide synthase from Acinetobacter baylyi (strain ATCC 33305 / BD413 / ADP1).